The primary structure comprises 307 residues: tRNA dimethylallyltransferase (307 aa).

5–12 provides a ligand contact to ATP; the sequence is GPTGTGKS. A substrate-binding site is contributed by 7–12; that stretch reads TGTGKS.

It belongs to the IPP transferase family. As to quaternary structure, monomer. It depends on Mg(2+) as a cofactor.

The enzyme catalyses adenosine(37) in tRNA + dimethylallyl diphosphate = N(6)-dimethylallyladenosine(37) in tRNA + diphosphate. Catalyzes the transfer of a dimethylallyl group onto the adenine at position 37 in tRNAs that read codons beginning with uridine, leading to the formation of N6-(dimethylallyl)adenosine (i(6)A). This is tRNA dimethylallyltransferase from Mycobacterium avium (strain 104).